The sequence spans 109 residues: Aquaporin-2 (109 aa).

Residues 1–6 are Cytoplasmic-facing; the sequence is SIAFSR. A helical transmembrane segment spans residues 7–27; it reads AVFSEFLATLLFVFFGLGSAL. Residues 28–35 are Extracellular-facing; the sequence is NWPQALPS. Residues 36–54 traverse the membrane as a helical segment; that stretch reads VLQIAMAFGLAIGTLVQAL. Residues 55 to 59 are Cytoplasmic-facing; that stretch reads GHISG. The segment at residues 60–69 is an intramembrane region (discontinuously helical); sequence AHINPAVTVA. The NPA 1 signature appears at 63 to 65; sequence NPA. Over 70-80 the chain is Cytoplasmic; that stretch reads CLVGCHVSFLR. A helical membrane pass occupies residues 81-102; the sequence is ATFYLAAQLLGAVAGAAILHEI. Residues 103-109 lie on the Extracellular side of the membrane; the sequence is TPPDIRG.

This sequence belongs to the MIP/aquaporin (TC 1.A.8) family. As to quaternary structure, homotetramer. Serine phosphorylation is necessary and sufficient for expression at the apical membrane. Endocytosis is not phosphorylation-dependent. In terms of processing, N-glycosylated.

The protein localises to the apical cell membrane. Its subcellular location is the basolateral cell membrane. It is found in the cell membrane. The protein resides in the cytoplasmic vesicle membrane. It localises to the golgi apparatus. The protein localises to the trans-Golgi network membrane. It carries out the reaction H2O(in) = H2O(out). It catalyses the reaction glycerol(in) = glycerol(out). Functionally, forms a water-specific channel that provides the plasma membranes of renal collecting duct with high permeability to water, thereby permitting water to move in the direction of an osmotic gradient. Plays an essential role in renal water homeostasis. Could also be permeable to glycerol. This Dugong dugon (Dugong) protein is Aquaporin-2.